Here is a 431-residue protein sequence, read N- to C-terminus: Adenylosuccinate synthetase (431 aa).

GTP-binding positions include 13-19 (GDEGKGK) and 41-43 (GHT). Residue Asp-14 is the Proton acceptor of the active site. Asp-14 and Gly-41 together coordinate Mg(2+). IMP is bound by residues 14–17 (DEGK), 39–42 (NAGH), Thr-130, Arg-144, Gln-225, Thr-240, and Arg-304. Residue His-42 is the Proton donor of the active site. 300–306 (ATTGRQR) lines the substrate pocket. Residues Arg-306, 332–334 (KLD), and 414–416 (STG) contribute to the GTP site.

This sequence belongs to the adenylosuccinate synthetase family. Homodimer. It depends on Mg(2+) as a cofactor.

It localises to the cytoplasm. It carries out the reaction IMP + L-aspartate + GTP = N(6)-(1,2-dicarboxyethyl)-AMP + GDP + phosphate + 2 H(+). Its pathway is purine metabolism; AMP biosynthesis via de novo pathway; AMP from IMP: step 1/2. In terms of biological role, plays an important role in the de novo pathway of purine nucleotide biosynthesis. Catalyzes the first committed step in the biosynthesis of AMP from IMP. In Saccharophagus degradans (strain 2-40 / ATCC 43961 / DSM 17024), this protein is Adenylosuccinate synthetase.